Here is a 718-residue protein sequence, read N- to C-terminus: MNIRLNAKVISTIPVFIAVNIAAVGIWFFDISSQSMPLILGIIAGGLVDLDNRLTGRLKNVFFTLIAFSISSFIVQLHIGKPIQYIVLMTVLTFIFTMIGAVGQRYSTIAFGSLVVALYTTLTYIPEVNVWFINPVMILCGTLLYSVVTLIVYLFFPNRPVQESVAKAFCALGEYLDTKSCFFDPDEVAEIEKKHLNFAMKNANVVTAFNIVRTALFYRIRGQHRHPLTQRMLRYYFAAQDIHERANSTHFDYQQITEKLKNTDLIFRIQRLLELQAQSCKEITASLRENKPYHFNKRVERALLGTLHSFDLYRAQHLNDQDELIDIQTLLDNLQSINWQLRQLAQDTTVTEQLAQIHTEQITGLKNISAVIFSHFTFESPLFRHAVRLSIVVFLCCAIVEFFQFNLGYWILLTTVFVCQPNYSATKVRLRQRIIGTILGVVVGSLLPYLNPTLELKLGLVVLTSTLFFFFRSNNYSFSTFFITLQVLLSFDVMGFDTAAALMPRLLDTLLGAAISWFAVSYLWPDWKYLQLDKVSHQALRSDAVYLLHIISQLQFGKSDDLKYRIARRNAHQYAAALSTTLSNMNNEPVKYKAYLQKGFDLLKLNYSLLSYISALGAYRDRMKNLQQTAQFLSGFYPVAKKIIYTLEHIEEIPEAIFNQQQESIETHLKELEKQEMTAEERAVFSLPYQQLNLITQLLPQFYGYFKKEINCQSAGAL.

6 helical membrane passes run 9 to 29 (VIST…IWFF), 60 to 80 (NVFF…LHIG), 83 to 103 (IQYI…GAVG), 136 to 156 (VMIL…YLFF), 391 to 411 (IVVF…GYWI), and 506 to 526 (LLDT…LWPD).

This sequence belongs to the YccS/YhfK family.

The protein resides in the cell membrane. This is an uncharacterized protein from Haemophilus influenzae (strain ATCC 51907 / DSM 11121 / KW20 / Rd).